The primary structure comprises 579 residues: 6-deoxy-6-sulfo-D-gluconate dehydratase (579 aa).

[4Fe-4S] cluster-binding residues include Cys59, Cys127, and Cys200.

The protein belongs to the IlvD/Edd family. Homodimer. The cofactor is [4Fe-4S] cluster.

It catalyses the reaction 6-deoxy-6-sulfo-D-gluconate = 2-dehydro-3,6-dideoxy-6-sulfo-D-gluconate + H2O. Its function is as follows. Catalyzes the dehydration of 6-deoxy-6-sulfo-D-gluconate to 2-dehydro-3,6-dideoxy-6-sulfo-D-gluconate. Is involved in a degradation pathway of sulfoquinovose (SQ) that allows P.putida SQ1 to use SQ as the sole carbon and energy source for growth. The protein is 6-deoxy-6-sulfo-D-gluconate dehydratase of Pseudomonas putida (Arthrobacter siderocapsulatus).